The following is a 334-amino-acid chain: Phosphoribosylformylglycinamidine cyclo-ligase (334 aa).

Belongs to the AIR synthase family.

The protein resides in the cytoplasm. The enzyme catalyses 2-formamido-N(1)-(5-O-phospho-beta-D-ribosyl)acetamidine + ATP = 5-amino-1-(5-phospho-beta-D-ribosyl)imidazole + ADP + phosphate + H(+). It participates in purine metabolism; IMP biosynthesis via de novo pathway; 5-amino-1-(5-phospho-D-ribosyl)imidazole from N(2)-formyl-N(1)-(5-phospho-D-ribosyl)glycinamide: step 2/2. This is Phosphoribosylformylglycinamidine cyclo-ligase from Thermococcus kodakarensis (strain ATCC BAA-918 / JCM 12380 / KOD1) (Pyrococcus kodakaraensis (strain KOD1)).